The chain runs to 219 residues: Nuclear transcription factor Y subunit B-8 (219 aa).

The interval 1 to 26 (MPDSDNDSGGPSNYAGGELSSPREQD) is disordered. The DNA-binding element occupies 29-35 (LPIANVS). The interval 56 to 67 (VQECVSEFISFI) is subunit association domain (SAD). A compositionally biased stretch (low complexity) spans 119–134 (AAASTTGAGTSAASTT). Disordered stretches follow at residues 119-142 (AAASTTGAGTSAASTTPPQQQHTA) and 166-219 (GQPM…NRGA). Residues 190 to 206 (GGRGGFGHHPGGGGGGS) show a composition bias toward gly residues.

Belongs to the NFYB/HAP3 subunit family. Heterotrimeric transcription factor composed of three components, NF-YA, NF-YB and NF-YC. NF-YB and NF-YC must interact and dimerize for NF-YA association and DNA binding. Interacts with NFYC2, NFYC4 and NFYC6.

The protein resides in the cytoplasm. In terms of biological role, component of the NF-Y/HAP transcription factor complex. This chain is Nuclear transcription factor Y subunit B-8, found in Oryza sativa subsp. japonica (Rice).